The sequence spans 290 residues: uncharacterized protein (290 aa).

Positions 161–216 (SNQREVESLEQLVHEQLNKLNTESKMEFENRKNDTKNEVQQLSARIVELHNLLAVS) form a coiled coil. The chain crosses the membrane as a helical span at residues 236–256 (AGVVMAFTGFLVLVIPFGLGV).

It is found in the mitochondrion membrane. This is an uncharacterized protein from Schizosaccharomyces pombe (strain 972 / ATCC 24843) (Fission yeast).